Here is a 207-residue protein sequence, read N- to C-terminus: ATP-dependent Clp protease proteolytic subunit 2 (207 aa).

Residue S102 is the Nucleophile of the active site. Residue H127 is part of the active site.

Belongs to the peptidase S14 family. As to quaternary structure, fourteen ClpP subunits assemble into 2 heptameric rings which stack back to back to give a disk-like structure with a central cavity, resembling the structure of eukaryotic proteasomes.

Its subcellular location is the cytoplasm. The catalysed reaction is Hydrolysis of proteins to small peptides in the presence of ATP and magnesium. alpha-casein is the usual test substrate. In the absence of ATP, only oligopeptides shorter than five residues are hydrolyzed (such as succinyl-Leu-Tyr-|-NHMec, and Leu-Tyr-Leu-|-Tyr-Trp, in which cleavage of the -Tyr-|-Leu- and -Tyr-|-Trp bonds also occurs).. Functionally, cleaves peptides in various proteins in a process that requires ATP hydrolysis. Has a chymotrypsin-like activity. Plays a major role in the degradation of misfolded proteins. In Bifidobacterium longum (strain NCC 2705), this protein is ATP-dependent Clp protease proteolytic subunit 2.